Reading from the N-terminus, the 678-residue chain is Probable metal-nicotianamine transporter YSL6 (678 aa).

The next 14 membrane-spanning stretches (helical) occupy residues 41–61 (VTVR…LITH), 65–85 (LTVG…YFLV), 113–133 (CVVA…MLAM), 158–178 (LGWM…SLVA), 226–246 (ISFF…SCGF), 279–299 (IVNC…WPYI), 324–344 (VFIS…KIIY), 394–414 (LAGS…PMIF), 419–439 (WYLV…NSYG), 467–487 (GGVI…STAA), 512–532 (IGTT…WTAF), 561–581 (SALP…AILI), 606–626 (FYIG…LFVW), and 641–661 (IASG…ILSI).

Belongs to the YSL (TC 2.A.67.2) family. Expressed in roots and leaves.

Its subcellular location is the membrane. May be involved in the transport of nicotianamine-chelated metals. This is Probable metal-nicotianamine transporter YSL6 (YSL6) from Oryza sativa subsp. japonica (Rice).